The following is a 47-amino-acid chain: uncharacterized protein (47 aa).

Disordered regions lie at residues 1-20 and 25-47; these read MSTD…EEWQ and EKEK…NRKG. Residues 25–40 are compositionally biased toward basic and acidic residues; it reads EKEKDENNRLFQEQKQ.

This is an uncharacterized protein from Dictyostelium discoideum (Social amoeba).